Consider the following 377-residue polypeptide: N-acetyldiaminopimelate deacetylase (377 aa).

Aspartate 69 is an active-site residue. Glutamate 128 serves as the catalytic Proton acceptor.

Belongs to the peptidase M20A family. N-acetyldiaminopimelate deacetylase subfamily.

The catalysed reaction is N-acetyl-(2S,6S)-2,6-diaminopimelate + H2O = (2S,6S)-2,6-diaminopimelate + acetate. Its pathway is amino-acid biosynthesis; L-lysine biosynthesis via DAP pathway; LL-2,6-diaminopimelate from (S)-tetrahydrodipicolinate (acetylase route): step 3/3. Catalyzes the conversion of N-acetyl-diaminopimelate to diaminopimelate and acetate. The chain is N-acetyldiaminopimelate deacetylase from Streptococcus sanguinis (strain SK36).